A 170-amino-acid chain; its full sequence is Zinc finger matrin-type protein 5 (170 aa).

A C3H1-type zinc finger spans residues 51–79 (EQNKRPCRKFLLTGQCDFGSNCRFSHMSE). The disordered stretch occupies residues 150–170 (PPSLRAPPPGGWPLQPSVQWG).

As to quaternary structure, component of the U11/U12 snRNPs that are part of the U12-type spliceosome.

Its subcellular location is the nucleus. This is Zinc finger matrin-type protein 5 (ZMAT5) from Bos taurus (Bovine).